Here is a 63-residue protein sequence, read N- to C-terminus: Large ribosomal subunit protein uL30 (63 aa).

This sequence belongs to the universal ribosomal protein uL30 family. Part of the 50S ribosomal subunit.

This Rhodospirillum rubrum (strain ATCC 11170 / ATH 1.1.1 / DSM 467 / LMG 4362 / NCIMB 8255 / S1) protein is Large ribosomal subunit protein uL30.